Consider the following 440-residue polypeptide: 5-hydroxytryptamine receptor 6 (440 aa).

Residues 1–27 (MVPEPGPVNSSTPAWGPGPPPAPGGSG) lie on the Extracellular side of the membrane. N-linked (GlcNAc...) asparagine glycosylation occurs at Asn-9. A helical transmembrane segment spans residues 28 to 52 (WVAAALCVVIVLTAAANSLLIALIC). The Cytoplasmic portion of the chain corresponds to 53 to 62 (TQPALRNTSN). A helical transmembrane segment spans residues 63-88 (FFLVSLFTSDLMVGLVVMPPAMLNAL). Residues 89–96 (YGRWVLAR) lie on the Extracellular side of the membrane. The chain crosses the membrane as a helical span at residues 97-122 (GLCLLWTAFDVMCCSASILNLCLISL). Cysteines 99 and 180 form a disulfide. Asp-106 is a serotonin binding site. The Cytoplasmic segment spans residues 123–142 (DRYLLILSPLRYKLRMTAPR). The chain crosses the membrane as a helical span at residues 143–167 (ALALILGAWSLAALASFLPLLLGWH). The Extracellular segment spans residues 168–185 (ELGKARTSAPGQCRLLAS). The chain crosses the membrane as a helical span at residues 186 to 209 (LPYVLVASGVTFFLPSGAICFTYC). At 210–268 (RILLAARKQAVQVASLTTGTATAGQALETLQVPRTPRPGMESADSRRLTTKHSRKALKA) the chain is on the cytoplasmic side. The chain crosses the membrane as a helical span at residues 269–295 (SLTLGILLSMFFVTWLPFFVASIAQAV). Topologically, residues 296 to 301 (CDCISP) are extracellular. The helical transmembrane segment at 302–325 (GLFDVLTWLGYCNSTMNPIIYPLF) threads the bilayer. Topologically, residues 326 to 440 (MRDFKRALGR…RQHPLGSPMN (115 aa)) are cytoplasmic.

It belongs to the G-protein coupled receptor 1 family. As to quaternary structure, interacts with CDK5. Interacts with MTOR. Interacts with RPTOR and NF1.

Its subcellular location is the cell membrane. In terms of biological role, G-protein coupled receptor for 5-hydroxytryptamine (serotonin), a biogenic hormone that functions as a neurotransmitter, a hormone and a mitogen. Also has a high affinity for tricyclic psychotropic drugs. Ligand binding causes a conformation change that triggers signaling via guanine nucleotide-binding proteins (G proteins) and modulates the activity of downstream effectors. HTR6 is coupled to G(s) G alpha proteins and mediates activation of adenylate cyclase activity. Controls pyramidal neurons migration during corticogenesis, through the regulation of CDK5 activity. Is an activator of mTOR signaling. This chain is 5-hydroxytryptamine receptor 6, found in Mus musculus (Mouse).